We begin with the raw amino-acid sequence, 289 residues long: Elongation factor Ts (289 aa).

Residues Thr82 to Val85 form an involved in Mg(2+) ion dislocation from EF-Tu region.

The protein belongs to the EF-Ts family.

The protein localises to the cytoplasm. Associates with the EF-Tu.GDP complex and induces the exchange of GDP to GTP. It remains bound to the aminoacyl-tRNA.EF-Tu.GTP complex up to the GTP hydrolysis stage on the ribosome. The sequence is that of Elongation factor Ts from Chloroherpeton thalassium (strain ATCC 35110 / GB-78).